The primary structure comprises 287 residues: Ferredoxin-type protein NapH (287 aa).

At 1–29 (MANRKRDAGREALEKKGWWRSHRWLVLRR) the chain is on the cytoplasmic side. Residues 30 to 50 (LCQFFVLGMFLSGPWFGVWIL) form a helical membrane-spanning segment. Residues 51 to 79 (HGNYSSSLLFDTVPLTDPLMTLQSLASGH) are Periplasmic-facing. Residues 80-100 (LPATVALTGAVIITVLYALAG) traverse the membrane as a helical segment. Topologically, residues 101–139 (KRLFCSWVCPLNPITDLANWLRRRFDLNQSATIPRHIRY) are cytoplasmic. The chain crosses the membrane as a helical span at residues 140–160 (VLLVVILVGSALTGTLIWEWI). The Periplasmic segment spans residues 161 to 170 (NPVSLMGRSL). The helical transmembrane segment at 171–191 (VMGFGSGALLILALFLFDLLV) threads the bilayer. Topologically, residues 192–287 (VEHGWCGHIC…TTRWSSGAKS (96 aa)) are cytoplasmic. 4Fe-4S ferredoxin-type domains are found at residues 217–247 (TVAATDRQKCNRCMDCFHVCPEPHVLRAPVL) and 251–280 (SPVQVTSRDCMTCGRCVDVCSEDVFTITTR). Positions 226, 229, 232, 236, 260, 263, 266, and 270 each coordinate [4Fe-4S] cluster.

As to quaternary structure, interacts with NapC. Requires [4Fe-4S] cluster as cofactor.

It localises to the cell inner membrane. Its function is as follows. Required for electron transfer from ubiquinol, via NapC, to the periplasmic nitrate reductase NapAB complex. The polypeptide is Ferredoxin-type protein NapH (napH) (Escherichia coli (strain K12)).